Here is a 288-residue protein sequence, read N- to C-terminus: Diaminopimelate epimerase (288 aa).

Substrate is bound by residues Asn-13, Gln-46, and Asn-66. Cys-75 functions as the Proton donor in the catalytic mechanism. Substrate contacts are provided by residues 76 to 77 (GN), Asn-166, Asn-199, and 217 to 218 (ER). Cys-226 (proton acceptor) is an active-site residue. 227–228 (GT) serves as a coordination point for substrate.

The protein belongs to the diaminopimelate epimerase family. Homodimer.

It is found in the cytoplasm. It carries out the reaction (2S,6S)-2,6-diaminopimelate = meso-2,6-diaminopimelate. It functions in the pathway amino-acid biosynthesis; L-lysine biosynthesis via DAP pathway; DL-2,6-diaminopimelate from LL-2,6-diaminopimelate: step 1/1. In terms of biological role, catalyzes the stereoinversion of LL-2,6-diaminopimelate (L,L-DAP) to meso-diaminopimelate (meso-DAP), a precursor of L-lysine and an essential component of the bacterial peptidoglycan. This is Diaminopimelate epimerase from Cupriavidus metallidurans (strain ATCC 43123 / DSM 2839 / NBRC 102507 / CH34) (Ralstonia metallidurans).